Here is a 263-residue protein sequence, read N- to C-terminus: Thiamine thiazole synthase (263 aa).

NAD(+) contacts are provided by residues S36, 55 to 56, G63, V127, and 157 to 159; these read ER and HVD. 2 residues coordinate Fe cation: D159 and H174. M228 serves as a coordination point for NAD(+). R238 is a binding site for glycine.

Belongs to the THI4 family. As to quaternary structure, homooctamer; tetramer of dimers. The cofactor is Fe(2+).

It carries out the reaction hydrogen sulfide + glycine + NAD(+) = ADP-5-ethyl-4-methylthiazole-2-carboxylate + nicotinamide + 3 H2O + H(+). It functions in the pathway cofactor biosynthesis; thiamine diphosphate biosynthesis. Its function is as follows. Involved in the biosynthesis of the thiazole moiety of thiamine. Catalyzes the conversion of NAD and glycine to adenosine diphosphate 5-(2-hydroxyethyl)-4-methylthiazole-2-carboxylate (ADT), an adenylated thiazole intermediate, using free sulfide as a source of sulfur. This is Thiamine thiazole synthase from Solidesulfovibrio magneticus (strain ATCC 700980 / DSM 13731 / RS-1) (Desulfovibrio magneticus).